Reading from the N-terminus, the 122-residue chain is UPF0102 protein DIP1513 (122 aa).

This sequence belongs to the UPF0102 family.

The polypeptide is UPF0102 protein DIP1513 (Corynebacterium diphtheriae (strain ATCC 700971 / NCTC 13129 / Biotype gravis)).